A 486-amino-acid chain; its full sequence is tRNA sulfurtransferase (486 aa).

One can recognise a THUMP domain in the interval 63 to 167; sequence DAFAERLGCI…HEKLYMVVRR (105 aa). Residues 185 to 186, K267, G289, and Q298 contribute to the ATP site; that span reads LI. C346 and C460 are joined by a disulfide. One can recognise a Rhodanese domain in the interval 408-486; it reads VDTQEVVIDI…GYTNVKVYRP (79 aa). The active-site Cysteine persulfide intermediate is the C460.

It belongs to the ThiI family.

The protein resides in the cytoplasm. It carries out the reaction [ThiI sulfur-carrier protein]-S-sulfanyl-L-cysteine + a uridine in tRNA + 2 reduced [2Fe-2S]-[ferredoxin] + ATP + H(+) = [ThiI sulfur-carrier protein]-L-cysteine + a 4-thiouridine in tRNA + 2 oxidized [2Fe-2S]-[ferredoxin] + AMP + diphosphate. The enzyme catalyses [ThiS sulfur-carrier protein]-C-terminal Gly-Gly-AMP + S-sulfanyl-L-cysteinyl-[cysteine desulfurase] + AH2 = [ThiS sulfur-carrier protein]-C-terminal-Gly-aminoethanethioate + L-cysteinyl-[cysteine desulfurase] + A + AMP + 2 H(+). Its pathway is cofactor biosynthesis; thiamine diphosphate biosynthesis. In terms of biological role, catalyzes the ATP-dependent transfer of a sulfur to tRNA to produce 4-thiouridine in position 8 of tRNAs, which functions as a near-UV photosensor. Also catalyzes the transfer of sulfur to the sulfur carrier protein ThiS, forming ThiS-thiocarboxylate. This is a step in the synthesis of thiazole, in the thiamine biosynthesis pathway. The sulfur is donated as persulfide by IscS. The sequence is that of tRNA sulfurtransferase from Shewanella denitrificans (strain OS217 / ATCC BAA-1090 / DSM 15013).